Reading from the N-terminus, the 166-residue chain is MAKTLSKSSGGALAPWLGISLIVILFDQLTKIAVLKTFAYGAMHQLTPFFNLTLIYNRGAAFGFLATAGGWQRWAFTALGIGATLVICYLLKRHGHQRLFSLSLALILGGALGNVIDRLIYGHVIDFLDFHVGAWHWPAFNLADSAITVGAVLLIYDELRRVRGAR.

4 helical membrane-spanning segments follow: residues 10–30, 46–66, 71–91, and 100–120; these read GGAL…DQLT, LTPF…GFLA, WQRW…CYLL, and FSLS…DRLI. Catalysis depends on residues aspartate 126 and aspartate 144. Residues 135 to 155 form a helical membrane-spanning segment; sequence WHWPAFNLADSAITVGAVLLI.

This sequence belongs to the peptidase A8 family.

It is found in the cell inner membrane. It catalyses the reaction Release of signal peptides from bacterial membrane prolipoproteins. Hydrolyzes -Xaa-Yaa-Zaa-|-(S,diacylglyceryl)Cys-, in which Xaa is hydrophobic (preferably Leu), and Yaa (Ala or Ser) and Zaa (Gly or Ala) have small, neutral side chains.. It functions in the pathway protein modification; lipoprotein biosynthesis (signal peptide cleavage). In terms of biological role, this protein specifically catalyzes the removal of signal peptides from prolipoproteins. This Burkholderia thailandensis (strain ATCC 700388 / DSM 13276 / CCUG 48851 / CIP 106301 / E264) protein is Lipoprotein signal peptidase.